The sequence spans 140 residues: Granulocyte-macrophage colony-stimulating factor (140 aa).

The first 17 residues, 1–17, serve as a signal peptide directing secretion; it reads MWLQNLLLLGTVVCSIC. The O-linked (GalNAc...) serine glycan is linked to serine 24. O-linked (GalNAc...) threonine glycosylation is present at threonine 27. Asparagine 45, asparagine 55, and asparagine 87 each carry an N-linked (GlcNAc...) asparagine glycan. 2 cysteine pairs are disulfide-bonded: cysteine 72/cysteine 114 and cysteine 106/cysteine 139.

It belongs to the GM-CSF family. In terms of assembly, monomer. The signaling GM-CSF receptor complex is a dodecamer of two head-to-head hexamers of two alpha, two beta, and two ligand subunits.

It localises to the secreted. In terms of biological role, cytokine that stimulates the growth and differentiation of hematopoietic precursor cells from various lineages, including granulocytes, macrophages, eosinophils and erythrocytes. In Cavia porcellus (Guinea pig), this protein is Granulocyte-macrophage colony-stimulating factor (CSF2).